The chain runs to 443 residues: Probable D-serine dehydratase (443 aa).

At K116 the chain carries N6-(pyridoxal phosphate)lysine.

It belongs to the serine/threonine dehydratase family. DsdA subfamily. Requires pyridoxal 5'-phosphate as cofactor.

The enzyme catalyses D-serine = pyruvate + NH4(+). This Bacillus cereus (strain AH187) protein is Probable D-serine dehydratase.